Here is a 1020-residue protein sequence, read N- to C-terminus: Retinoblastoma-related protein (1020 aa).

Composition is skewed to polar residues over residues Ser382–Leu391 and Ala398–Asn409. The tract at residues Ser382–Asn409 is disordered. The segment at Thr415–Leu616 is domain A. The pocket stretch occupies residues Thr415–Pro869. A spacer region spans residues Thr617 to Glu737. Residues Thr738–Pro869 form a domain B region.

This sequence belongs to the retinoblastoma protein (RB) family.

The protein resides in the nucleus. Regulator of biological processes that recruits a histone deacetylase to control gene transcription. May play a role in the entry into mitosis, negatively regulating the cell proliferation. Formation of stable complexes with geminiviridae replication-associated proteins may create a cellular environment which favors viral DNA replication. This is Retinoblastoma-related protein (RBR) from Ricinus communis (Castor bean).